The sequence spans 511 residues: Maturase K (511 aa).

It belongs to the intron maturase 2 family. MatK subfamily.

It localises to the plastid. The protein resides in the chloroplast. Its function is as follows. Usually encoded in the trnK tRNA gene intron. Probably assists in splicing its own and other chloroplast group II introns. In Poa pratensis (Kentucky bluegrass), this protein is Maturase K.